We begin with the raw amino-acid sequence, 230 residues long: Triggering receptor expressed on myeloid cells 1 (230 aa).

Residues 1 to 20 (MRKAGLWGLLCVFFVSEVKA) form the signal peptide. Residues 21–124 (AIVLEEERYD…IYHPPNDPVV (104 aa)) form the Ig-like V-type domain. Topologically, residues 21–202 (AIVLEEERYD…TDADSVSTSS (182 aa)) are extracellular. Cys-41 and Cys-113 are joined by a disulfide. N-linked (GlcNAc...) asparagine glycosylation occurs at Asn-191. The chain crosses the membrane as a helical span at residues 203–223 (VTISVICGLLSKSLVFIILFI). The Cytoplasmic portion of the chain corresponds to 224–230 (VTKRTFG).

As to quaternary structure, monomer. Homomultimer; when activated. Interacts with TYROBP/DAP12. Interacts with TLR4.

Its subcellular location is the cell membrane. Its function is as follows. Cell surface receptor that plays important roles in innate and adaptive immunity by amplifying inflammatory responses. Upon activation by various ligands such as PGLYRP1, HMGB1 or HSP70, multimerizes and forms a complex with transmembrane adapter TYROBP/DAP12. In turn, initiates a SYK-mediated cascade of tyrosine phosphorylation, activating multiple downstream mediators such as BTK, MAPK1, MAPK3 or phospholipase C-gamma. This cascade promotes the neutrophil- and macrophage-mediated release of pro-inflammatory cytokines and/or chemokines, as well as their migration and thereby amplifies inflammatory responses that are triggered by bacterial and fungal infections. By also promoting the amplification of inflammatory signals that are initially triggered by Toll-like receptor (TLR) and NOD-like receptor engagement, plays a major role in the pathophysiology of acute and chronic inflammatory diseases of different etiologies including septic shock and atherosclerosis. The sequence is that of Triggering receptor expressed on myeloid cells 1 (Trem1) from Mus musculus (Mouse).